The chain runs to 413 residues: Clusterin-associated protein 1 (413 aa).

Residues 198–291 are a coiled coil; it reads KTKDLLNNVA…ERFEEAKNTL (94 aa). The disordered stretch occupies residues 305 to 413; the sequence is LLKSGSNDDS…EPLDESDNDF (109 aa). 2 stretches are compositionally biased toward acidic residues: residues 312–328 and 360–388; these read DDSDIDIQEDDESDSEL and DSDDNEDSEESEIDMEDDDDEDDDLEDES. 3 positions are modified to phosphoserine: serine 314, serine 324, and serine 326. Residue serine 409 is modified to Phosphoserine.

This sequence belongs to the CLUAP1 family. Interacts with CLU/clusterin. Interacts with UBXN10; the interaction is direct. As to expression, expressed in testis, thyroid and trachea and to a lower extent in spinal cord and adrenal gland. Highly expressed in colon cancer and osteosarcoma cell lines.

The protein localises to the cell projection. It is found in the cilium. The protein resides in the nucleus. Its function is as follows. Required for cilia biogenesis. Appears to function within the multiple intraflagellar transport complex B (IFT-B). Key regulator of hedgehog signaling. This Homo sapiens (Human) protein is Clusterin-associated protein 1 (CLUAP1).